A 545-amino-acid chain; its full sequence is MSAYARALDALRQHRRETEDFDLRQAFGADPDRFSRCSAALDDMLLDYSKCAVSDETLALLDKIAEAAGVIERREEMFSAKRINVTENRAVLHTALRNDSTRPVMLDGKDVMPDVEAVLAAMSTFSEGIRSGTIKAATGKSFTDVVNIGIGGSDLGPAMATLALAPYHDGPRLHYVSNVDGAHIHDTLKALDPDTTLFIIASKTFTTIETMTNAGTARSWIAEKLGQDAVGSHFAAVSTALDKVAAFGIDESRVFGFWDWVGGRYSLWSAIGLPIMIAIGPENFRRFLDGAELMDRHFREAPSRENLPMMLGLIGFWHRVICGYPARAVIPYDQRLARLPAYLQQLDMESNGKRVTFEGESVTVPTGPLVWGEPGTNGQHAFFQLLHQGTDIIPVEFMIAARGHEPELKHHHDLLIANCLAQSEALMKGRTLQEAKAQLLAKGMSEAEADKLAPHRVFPGNRPSVTIIYEKLDPFTLGRLIALYEHRVFVEAALFRINAFDQWGVELGKELATELLPVVEGKKDASGRDSSTAGLVAQIAALRDS.

The active-site Proton donor is the Glu349. Catalysis depends on residues His380 and Lys509.

This sequence belongs to the GPI family.

Its subcellular location is the cytoplasm. It catalyses the reaction alpha-D-glucose 6-phosphate = beta-D-fructose 6-phosphate. Its pathway is carbohydrate biosynthesis; gluconeogenesis. It participates in carbohydrate degradation; glycolysis; D-glyceraldehyde 3-phosphate and glycerone phosphate from D-glucose: step 2/4. Functionally, catalyzes the reversible isomerization of glucose-6-phosphate to fructose-6-phosphate. The polypeptide is Glucose-6-phosphate isomerase (Chelativorans sp. (strain BNC1)).